Consider the following 478-residue polypeptide: Sulfate adenylyltransferase subunit 1 (478 aa).

A tr-type G domain is found at 28-244 (KTMLRFLTCG…LESVDVVNAR (217 aa)). The G1 stretch occupies residues 37 to 44 (GSVDDGKS). GTP is bound at residue 37-44 (GSVDDGKS). The G2 stretch occupies residues 95 to 99 (GITID). The G3 stretch occupies residues 116-119 (DTPG). Residues 116–120 (DTPGH) and 171–174 (NKMD) contribute to the GTP site. Positions 171–174 (NKMD) are G4. The interval 209–211 (SAL) is G5.

It belongs to the TRAFAC class translation factor GTPase superfamily. Classic translation factor GTPase family. CysN/NodQ subfamily. Heterodimer composed of CysD, the smaller subunit, and CysN.

It catalyses the reaction sulfate + ATP + H(+) = adenosine 5'-phosphosulfate + diphosphate. The protein operates within sulfur metabolism; hydrogen sulfide biosynthesis; sulfite from sulfate: step 1/3. Functionally, with CysD forms the ATP sulfurylase (ATPS) that catalyzes the adenylation of sulfate producing adenosine 5'-phosphosulfate (APS) and diphosphate, the first enzymatic step in sulfur assimilation pathway. APS synthesis involves the formation of a high-energy phosphoric-sulfuric acid anhydride bond driven by GTP hydrolysis by CysN coupled to ATP hydrolysis by CysD. This is Sulfate adenylyltransferase subunit 1 from Yersinia pseudotuberculosis serotype O:1b (strain IP 31758).